Reading from the N-terminus, the 448-residue chain is Probable tryptophanase (448 aa).

Lys253 carries the N6-(pyridoxal phosphate)lysine modification.

Belongs to the beta-eliminating lyase family. Requires pyridoxal 5'-phosphate as cofactor.

The enzyme catalyses L-tryptophan + H2O = indole + pyruvate + NH4(+). Its pathway is amino-acid degradation; L-tryptophan degradation via pyruvate pathway; indole and pyruvate from L-tryptophan: step 1/1. The sequence is that of Probable tryptophanase from Halobacterium salinarum (strain ATCC 29341 / DSM 671 / R1).